The primary structure comprises 428 residues: Histidinol dehydrogenase homolog (428 aa).

Zn(2+) is bound by residues glutamine 250 and histidine 253. Active-site proton acceptor residues include glutamate 320 and histidine 321. 2 residues coordinate Zn(2+): aspartate 354 and histidine 413.

This sequence belongs to the histidinol dehydrogenase family. It depends on Zn(2+) as a cofactor.

This Pelagibacter ubique (strain HTCC1062) protein is Histidinol dehydrogenase homolog.